A 1547-amino-acid polypeptide reads, in one-letter code: Tubby-related protein 4 (1547 aa).

3 WD repeats span residues 80 to 119 (GHNS…WSVE), 123 to 162 (DRGA…HWSS), and 165 to 204 (NLES…LAHV). Residues 364 to 414 (ALYVVRVEHRVSSLQLLCQQAIASTLREDKDVNKLTLPPRLCSYLSTAFIP) form the SOCS box domain. The interval 530-580 (SPKISRSSKSPKLPRISIEARKSPKLPRAAQEISRSPRLPMRKPSMGSPSL) is disordered. The segment covering 533 to 546 (ISRSSKSPKLPRIS) has biased composition (low complexity). The residue at position 577 (Ser577) is a Phosphoserine. Asymmetric dimethylarginine is present on residues Arg949 and Arg954. A phosphoserine mark is found at Ser1347 and Ser1378. The tract at residues 1374 to 1414 (SLISSPRLGREKKKVKSQKDQLKSKKLNKTNEFQDSSESEP) is disordered. A TUB region spans residues 1436–1547 (SKRSLRTASE…ALANVTQRLK (112 aa)).

It belongs to the TUB family.

The protein localises to the cytoplasm. The protein operates within protein modification; protein ubiquitination. Its function is as follows. May be a substrate-recognition component of a SCF-like ECS (Elongin-Cullin-SOCS-box protein) E3 ubiquitin ligase complex which mediates the ubiquitination and subsequent proteasomal degradation of target proteins. This is Tubby-related protein 4 (Tulp4) from Mus musculus (Mouse).